A 782-amino-acid polypeptide reads, in one-letter code: DnaJ homolog subfamily C member 16 (782 aa).

The signal sequence occupies residues 1–25 (MEVRKLSISWQFLIVLVLILQILSA). Topologically, residues 26–535 (LDFDPYRVLG…DSIFHNNWRE (510 aa)) are cytoplasmic. The J domain maps to 29–93 (DPYRVLGVSR…EKRSNYDQYG (65 aa)). In terms of domain architecture, Thioredoxin spans 119–247 (FYFDESFFHF…LRQFVESLLP (129 aa)). Residues 536–556 (MMPLLSLIFSALFILFGTVIV) form a helical; Anchor for type IV membrane protein membrane-spanning segment. Topologically, residues 557–782 (QAFSDSNDER…FYIPSWPELD (226 aa)) are extracellular. The disordered stretch occupies residues 562 to 593 (SNDERESSPPEKEEAQEKTGKTEPSFTKENSS). The span at 563 to 582 (NDERESSPPEKEEAQEKTGK) shows a compositional bias: basic and acidic residues. Residues 583-593 (TEPSFTKENSS) show a composition bias toward polar residues. N-linked (GlcNAc...) asparagine glycosylation is present at Asn631.

The protein localises to the endoplasmic reticulum membrane. In terms of biological role, plays an important role in regulating the size of autophagosomes during the formation process. This Homo sapiens (Human) protein is DnaJ homolog subfamily C member 16 (DNAJC16).